We begin with the raw amino-acid sequence, 136 residues long: Large ribosomal subunit protein uL16 (136 aa).

This sequence belongs to the universal ribosomal protein uL16 family. In terms of assembly, part of the 50S ribosomal subunit.

Binds 23S rRNA and is also seen to make contacts with the A and possibly P site tRNAs. This chain is Large ribosomal subunit protein uL16, found in Yersinia enterocolitica serotype O:8 / biotype 1B (strain NCTC 13174 / 8081).